Reading from the N-terminus, the 80-residue chain is Exodeoxyribonuclease 7 small subunit (80 aa).

The protein belongs to the XseB family. Heterooligomer composed of large and small subunits.

Its subcellular location is the cytoplasm. It carries out the reaction Exonucleolytic cleavage in either 5'- to 3'- or 3'- to 5'-direction to yield nucleoside 5'-phosphates.. Bidirectionally degrades single-stranded DNA into large acid-insoluble oligonucleotides, which are then degraded further into small acid-soluble oligonucleotides. This is Exodeoxyribonuclease 7 small subunit from Pseudomonas fluorescens (strain Pf0-1).